The primary structure comprises 89 residues: UPF0237 protein DIP1286 (89 aa).

The ACT domain maps to 4 to 78; it reads IISVTGADHT…KDQNLVIRIQ (75 aa).

It belongs to the UPF0237 family.

The polypeptide is UPF0237 protein DIP1286 (Corynebacterium diphtheriae (strain ATCC 700971 / NCTC 13129 / Biotype gravis)).